A 155-amino-acid chain; its full sequence is Large ribosomal subunit protein bL17 (155 aa).

It belongs to the bacterial ribosomal protein bL17 family. In terms of assembly, part of the 50S ribosomal subunit. Contacts protein L32.

The protein is Large ribosomal subunit protein bL17 of Syntrophotalea carbinolica (strain DSM 2380 / NBRC 103641 / GraBd1) (Pelobacter carbinolicus).